The primary structure comprises 101 residues: MIKSELVQRIAEHNPHLYQRDVENIVNAILDEIVTALARGDRVELRGFGAFSVKHRPARAGRNPRTGEHVPVDQKSVPFFKTGKEMRERLNRENATSEASA.

Belongs to the bacterial histone-like protein family. In terms of assembly, heterodimer of an alpha and a beta chain.

This protein is one of the two subunits of integration host factor, a specific DNA-binding protein that functions in genetic recombination as well as in transcriptional and translational control. In Nitrobacter hamburgensis (strain DSM 10229 / NCIMB 13809 / X14), this protein is Integration host factor subunit beta.